We begin with the raw amino-acid sequence, 537 residues long: Glutamyl-tRNA(Gln) amidotransferase subunit A, chloroplastic/mitochondrial (537 aa).

Residues K116 and S191 each act as charge relay system in the active site. S215 (acyl-ester intermediate) is an active-site residue.

The protein belongs to the amidase family. GatA subfamily. Subunit of the heterotrimeric GatCAB amidotransferase (AdT) complex, composed of A, B and C subunits.

It localises to the mitochondrion. It is found in the plastid. The protein resides in the chloroplast stroma. The enzyme catalyses L-glutamyl-tRNA(Gln) + L-glutamine + ATP + H2O = L-glutaminyl-tRNA(Gln) + L-glutamate + ADP + phosphate + H(+). Its function is as follows. Allows the formation of correctly charged Gln-tRNA(Gln) through the transamidation of misacylated Glu-tRNA(Gln) in chloroplasts and mitochondria. The reaction takes place in the presence of glutamine and ATP through an activated gamma-phospho-Glu-tRNA(Gln). The polypeptide is Glutamyl-tRNA(Gln) amidotransferase subunit A, chloroplastic/mitochondrial (Arabidopsis thaliana (Mouse-ear cress)).